Reading from the N-terminus, the 341-residue chain is GTP-binding protein GTR2 (341 aa).

5 residues coordinate GTP: Ser23, Ser24, Ser43, His124, and Asp127.

The protein belongs to the GTR/RAG GTP-binding protein family. Heterodimer; with GTR1. Component of the GSE complex composed of GTR1, GTR2, SLM4, MEH1 and LTV1. Component of the EGO complex, at least composed of GTR2, SLM4 and MEH1. Interacts with GTR1; the interaction is direct.

It localises to the vacuole membrane. The enzyme catalyses GTP + H2O = GDP + phosphate + H(+). Its function is as follows. GTPase involved in activation of the TORC1 signaling pathway, which promotes growth and represses autophagy in nutrient-rich conditions. Also required for TORC1 inactivation during nitrogen starvation. Required for intracellular sorting of GAP1 out of the endosome. Involved in the regulation of microautophagy. This Saccharomyces cerevisiae (strain ATCC 204508 / S288c) (Baker's yeast) protein is GTP-binding protein GTR2.